Reading from the N-terminus, the 606-residue chain is Double-stranded RNA-binding protein Staufen homolog 2 (606 aa).

DRBM domains are found at residues 8–75 (TPMC…ESSL) and 95–181 (TPTV…ALKN). 2 disordered regions span residues 57-97 (SIKK…ITPT) and 177-205 (QALK…SDAS). A compositionally biased stretch (polar residues) spans 85–97 (ADSNSNPGSITPT). Residues 192–205 (SEEKKETEENSDAS) are compositionally biased toward basic and acidic residues. DRBM domains lie at 207 to 274 (SEIS…ELKK), 307 to 375 (NPIS…QLGY), and 493 to 557 (QPSQ…QLSE). Residues 580–606 (RLAERTESKPTNSGTTAQDCKDSKAVV) form a disordered region. The segment covering 588 to 597 (KPTNSGTTAQ) has biased composition (polar residues).

Its function is as follows. RNA-binding protein required for the microtubule-dependent transport of RNAs within polarized cell types. The protein is Double-stranded RNA-binding protein Staufen homolog 2 (stau2) of Danio rerio (Zebrafish).